Consider the following 210-residue polypeptide: Imidazole glycerol phosphate synthase subunit HisH (210 aa).

In terms of domain architecture, Glutamine amidotransferase type-1 spans 1–205 (MIAVINYGAG…VELALSRGSG (205 aa)). Cysteine 79 (nucleophile) is an active-site residue. Residues histidine 180 and glutamate 182 contribute to the active site.

As to quaternary structure, heterodimer of HisH and HisF.

The protein localises to the cytoplasm. The catalysed reaction is 5-[(5-phospho-1-deoxy-D-ribulos-1-ylimino)methylamino]-1-(5-phospho-beta-D-ribosyl)imidazole-4-carboxamide + L-glutamine = D-erythro-1-(imidazol-4-yl)glycerol 3-phosphate + 5-amino-1-(5-phospho-beta-D-ribosyl)imidazole-4-carboxamide + L-glutamate + H(+). It carries out the reaction L-glutamine + H2O = L-glutamate + NH4(+). It functions in the pathway amino-acid biosynthesis; L-histidine biosynthesis; L-histidine from 5-phospho-alpha-D-ribose 1-diphosphate: step 5/9. IGPS catalyzes the conversion of PRFAR and glutamine to IGP, AICAR and glutamate. The HisH subunit catalyzes the hydrolysis of glutamine to glutamate and ammonia as part of the synthesis of IGP and AICAR. The resulting ammonia molecule is channeled to the active site of HisF. This is Imidazole glycerol phosphate synthase subunit HisH from Herpetosiphon aurantiacus (strain ATCC 23779 / DSM 785 / 114-95).